Reading from the N-terminus, the 559-residue chain is CCR4-NOT transcription complex subunit 6-like (559 aa).

The tract at residues Met-1–Lys-148 is required for interaction with cnot1, cnot3 and cnot7. Residues Met-1 to Thr-550 form a nuclease domain region. LRR repeat units follow at residues His-52–Leu-73, His-75–Met-96, Thr-98–Phe-120, and Gln-121–Pro-143. Position 235 (Glu-235) interacts with Mg(2+). Positions 235, 271, 353, and 358 each coordinate substrate. Residue Asp-405 participates in Mg(2+) binding. Asp-405 functions as the Proton donor/acceptor in the catalytic mechanism. Asn-407, Asn-474, and Phe-479 together coordinate substrate.

Belongs to the CCR4/nocturin family. In terms of assembly, component of the CCR4-NOT complex. Requires Mg(2+) as cofactor.

Its subcellular location is the cytoplasm. It is found in the nucleus. It carries out the reaction Exonucleolytic cleavage of poly(A) to 5'-AMP.. Poly(A) nuclease with 3'-5' RNase activity. Catalytic component of the CCR4-NOT complex which is one of the major cellular mRNA deadenylases and is linked to various cellular processes including bulk mRNA degradation, miRNA-mediated repression, translational repression during translational initiation and general transcription regulation. Additional complex functions may be a consequence of its influence on mRNA expression. In Danio rerio (Zebrafish), this protein is CCR4-NOT transcription complex subunit 6-like (cnot6l).